The sequence spans 160 residues: Transcriptional regulator MraZ (160 aa).

SpoVT-AbrB domains are found at residues 5 to 50 and 93 to 136; these read KFET…EGVY and AIEC…SQAE.

Belongs to the MraZ family. Forms oligomers.

It is found in the cytoplasm. Its subcellular location is the nucleoid. This chain is Transcriptional regulator MraZ, found in Geotalea uraniireducens (strain Rf4) (Geobacter uraniireducens).